Consider the following 381-residue polypeptide: Creatine kinase B-type (381 aa).

S4 carries the post-translational modification Phosphoserine. A Phosphagen kinase N-terminal domain is found at 11-98 (KLRFPAEDEF…FDPIIEDRHG (88 aa)). T35 carries the post-translational modification Phosphothreonine. A Glycyl lysine isopeptide (Lys-Gly) (interchain with G-Cter in ubiquitin) cross-link involves residue K45. Creatine is bound at residue V72. Positions 96 to 110 (RHGGYKPSDEHKTDL) are enriched in basic and acidic residues. A disordered region spans residues 96-123 (RHGGYKPSDEHKTDLNPDNLQGGDDLDP). Residues K101 and K107 each participate in a glycyl lysine isopeptide (Lys-Gly) (interchain with G-Cter in ubiquitin) cross-link. Phosphotyrosine is present on Y125. The 243-residue stretch at 125–367 (YVLSSRVRTG…KLLIEMEQRL (243 aa)) folds into the Phosphagen kinase C-terminal domain. ATP is bound by residues 128–132 (SSRVR), R130, R132, and H191. An internal MTS-like signal region spans residues 130 to 138 (RVRTGRSIR). A Phosphoserine modification is found at S199. E232 contributes to the creatine binding site. R236 provides a ligand contact to ATP. Residue Y269 is modified to 3'-nitrotyrosine. S285 lines the creatine pocket. An ATP-binding site is contributed by R292. S309 carries the post-translational modification Phosphoserine. Residues R320, 320-325 (RGTGGV), and D335 contribute to the ATP site. Phosphothreonine is present on T322. K381 participates in a covalent cross-link: Glycyl lysine isopeptide (Lys-Gly) (interchain with G-Cter in ubiquitin).

This sequence belongs to the ATP:guanido phosphotransferase family. Dimer of identical or non-identical chains, which can be either B (brain type) or M (muscle type). With MM being the major form in skeletal muscle and myocardium, MB existing in myocardium, and BB existing in many tissues, especially brain. Interacts with SLC12A6 (via C-terminus); the interaction may be required for SLC12A6 potassium-chloride cotransport activity. Ubiquitinated by the ECS(ASB9) complex, leading to its degradation by the proteasome.

Its subcellular location is the cytoplasm. The protein localises to the cytosol. It is found in the mitochondrion. The protein resides in the cell membrane. The catalysed reaction is creatine + ATP = N-phosphocreatine + ADP + H(+). Its function is as follows. Reversibly catalyzes the transfer of phosphate between ATP and various phosphogens (e.g. creatine phosphate). Creatine kinase isoenzymes play a central role in energy transduction in tissues with large, fluctuating energy demands, such as skeletal muscle, heart, brain and spermatozoa. Acts as a key regulator of adaptive thermogenesis as part of the futile creatine cycle: localizes to the mitochondria of thermogenic fat cells and acts by mediating phosphorylation of creatine to initiate a futile cycle of creatine phosphorylation and dephosphorylation. During the futile creatine cycle, creatine and N-phosphocreatine are in a futile cycle, which dissipates the high energy charge of N-phosphocreatine as heat without performing any mechanical or chemical work. This Oryctolagus cuniculus (Rabbit) protein is Creatine kinase B-type (CKB).